The following is an 82-amino-acid chain: Turripeptide IX-07 (82 aa).

Positions 1 to 21 are cleaved as a signal peptide; that stretch reads MGFYMLLTVALLLTSLMNVEA. The propeptide occupies 22–39; it reads TPVNQAERSALEKSGLGN. Intrachain disulfides connect C48–C70, C55–C74, and C60–C81.

In terms of tissue distribution, expressed by the venom duct.

It is found in the secreted. In Gemmula speciosa (Splendid gem-turris), this protein is Turripeptide IX-07.